The chain runs to 58 residues: MERKKLVCPLCGGTKFRVEEGKIDSKWGFTAHKVKIVICENCGYVMLFYEGRTIWDFD.

To A.fulgidus AF2407.1.

This is an uncharacterized protein from Pyrococcus abyssi (strain GE5 / Orsay).